The primary structure comprises 745 residues: Serine/threonine-protein kinase BUR1 (745 aa).

Positions 1–21 are disordered; it reads MSVIAGHHVPRSNDQRQYDTP. In terms of domain architecture, Protein kinase spans 44 to 349; the sequence is YEVIEKLGQG…ALDALNHKFF (306 aa). ATP is bound by residues 50–58 and Lys-73; that span reads LGQGTFGVV. Residue Asp-179 is the Proton acceptor of the active site. Basic and acidic residues-rich tracts occupy residues 380-406, 428-475, and 493-508; these read DKEQ…RYNA, DYID…DIQN, and KLRE…KKYD. A disordered region spans residues 380–701; the sequence is DKEQAVSELK…EVSDLEEDSD (322 aa). Over residues 516-534 the composition is skewed to low complexity; that stretch reads SRGSKSPSPSKLSSISQSK. A compositionally biased stretch (basic and acidic residues) spans 547-557; it reads ASRESSLERKQ. 2 stretches are compositionally biased toward polar residues: residues 558–567 and 586–598; these read VSNGIRTTTD and LTSN…PTRN. Basic and acidic residues predominate over residues 599 to 631; it reads KSVERPKDLEKPTNGVTEDRNKKPVLEEKKEVV. A compositionally biased stretch (low complexity) spans 632–660; sequence KPNLAIPKIKKSSSLVSLSSRSSTTPVIS. Residues 661–674 are compositionally biased toward polar residues; it reads NPSKVTKRAASSVT. The segment covering 692 to 701 has biased composition (acidic residues); the sequence is EVSDLEEDSD.

Belongs to the protein kinase superfamily. CMGC Ser/Thr protein kinase family. CDC2/CDKX subfamily.

The protein localises to the nucleus. It carries out the reaction L-seryl-[protein] + ATP = O-phospho-L-seryl-[protein] + ADP + H(+). The enzyme catalyses L-threonyl-[protein] + ATP = O-phospho-L-threonyl-[protein] + ADP + H(+). The catalysed reaction is [DNA-directed RNA polymerase] + ATP = phospho-[DNA-directed RNA polymerase] + ADP + H(+). Its function is as follows. Serine/threonine-protein kinase involved in transcription regulation. Phosphorylates the UBC2/RAD6 ubiquitin-conjugating enzyme (E2), leading to monoubiquitination of histone H2B and the silencing of telomeric-associated genes. Also required for histone H3 methylation. Necessary for the recovery from pheromone-induced growth arrest in the cell cycle G1 phase. Required for pseudohyphal growth and virulence in mice. In Candida albicans (strain SC5314 / ATCC MYA-2876) (Yeast), this protein is Serine/threonine-protein kinase BUR1 (CRK1).